A 206-amino-acid chain; its full sequence is Orotate phosphoribosyltransferase (206 aa).

Residues arginine 97, lysine 98, lysine 101, and 125–133 (NDVIASGRS) contribute to the 5-phospho-alpha-D-ribose 1-diphosphate site. Position 157 (arginine 157) interacts with orotate.

The protein belongs to the purine/pyrimidine phosphoribosyltransferase family. PyrE subfamily. Homodimer. It depends on Mg(2+) as a cofactor.

The enzyme catalyses orotidine 5'-phosphate + diphosphate = orotate + 5-phospho-alpha-D-ribose 1-diphosphate. The protein operates within pyrimidine metabolism; UMP biosynthesis via de novo pathway; UMP from orotate: step 1/2. Its function is as follows. Catalyzes the transfer of a ribosyl phosphate group from 5-phosphoribose 1-diphosphate to orotate, leading to the formation of orotidine monophosphate (OMP). The polypeptide is Orotate phosphoribosyltransferase (Chlamydia caviae (strain ATCC VR-813 / DSM 19441 / 03DC25 / GPIC) (Chlamydophila caviae)).